Consider the following 134-residue polypeptide: Large ribosomal subunit protein uL16c (134 aa).

Positions 1 to 22 (MLSPKRTRFRKQHRGRMKGISH) are disordered.

The protein belongs to the universal ribosomal protein uL16 family. Part of the 50S ribosomal subunit.

It is found in the plastid. The protein localises to the chloroplast. This Nicotiana tabacum (Common tobacco) protein is Large ribosomal subunit protein uL16c.